A 66-amino-acid chain; its full sequence is U10-theraphotoxin-Cg1a 2 (66 aa).

A signal peptide spans 1-21 (MKTSVLFVIFGLALLLCLSFA). Positions 22–29 (AELEDTGR) are excised as a propeptide. Intrachain disulfides connect cysteine 31–cysteine 46, cysteine 38–cysteine 51, and cysteine 45–cysteine 58.

Belongs to the neurotoxin 10 (Hwtx-1) family. 29 (Jztx-13) subfamily. As to expression, expressed by the venom gland.

Its subcellular location is the secreted. Its function is as follows. Probable ion channel inhibitor. The sequence is that of U10-theraphotoxin-Cg1a 2 from Chilobrachys guangxiensis (Chinese earth tiger tarantula).